Here is a 188-residue protein sequence, read N- to C-terminus: GMP synthase [glutamine-hydrolyzing] subunit A (188 aa).

A Glutamine amidotransferase type-1 domain is found at 3–188 (KVLVVAFGGQ…FQNFVELCKR (186 aa)). C79 functions as the Nucleophile in the catalytic mechanism. Active-site residues include H166 and E168.

Heterodimer composed of a glutamine amidotransferase subunit (A) and a GMP-binding subunit (B).

It catalyses the reaction XMP + L-glutamine + ATP + H2O = GMP + L-glutamate + AMP + diphosphate + 2 H(+). It participates in purine metabolism; GMP biosynthesis; GMP from XMP (L-Gln route): step 1/1. In terms of biological role, catalyzes the synthesis of GMP from XMP. In Ignicoccus hospitalis (strain KIN4/I / DSM 18386 / JCM 14125), this protein is GMP synthase [glutamine-hydrolyzing] subunit A.